The sequence spans 301 residues: 2-(hydroxymethyl)glutarate dehydrogenase (301 aa).

NAD(+) is bound by residues 8-22 and Ser-99; that span reads GFIG…MAIN. The active site involves Lys-174. Lys-243 lines the NAD(+) pocket.

The protein belongs to the HIBADH-related family. In terms of assembly, homotetramer.

It catalyses the reaction (S)-2-hydroxymethylglutarate + NAD(+) = 2-formylglutarate + NADH + H(+). It participates in cofactor degradation; nicotinate degradation; propanoate and pyruvate from 6-hydroxynicotinate: step 3/8. Functionally, catalyzes the conversion of 2-formylglutarate to (S)-2-hydroxymethylglutarate. Has very low activity with (S)-3-hydroxyisobutyrate. This is 2-(hydroxymethyl)glutarate dehydrogenase from Eubacterium barkeri (Clostridium barkeri).